Consider the following 391-residue polypeptide: Coiled-coil domain-containing protein 85C (391 aa).

Coiled-coil stretches lie at residues Glu19 to Cys86 and Lys116 to Ile146. Disordered stretches follow at residues Gly155–Ser238 and Pro278–Thr303. Residues Gly157–Ser175 show a composition bias toward polar residues. Low complexity predominate over residues Asp182–Ser194. A compositionally biased stretch (polar residues) spans His280 to Thr303.

The protein belongs to the CCDC85 family.

It localises to the cell junction. The protein resides in the tight junction. It is found in the adherens junction. Its function is as follows. May play a role in cell-cell adhesion and epithelium development through its interaction with proteins of the beta-catenin family. May play an important role in cortical development, especially in the maintenance of radial glia. The protein is Coiled-coil domain-containing protein 85C (ccdc85c) of Xenopus tropicalis (Western clawed frog).